The sequence spans 118 residues: Large ribosomal subunit protein bL20 (118 aa).

Belongs to the bacterial ribosomal protein bL20 family.

In terms of biological role, binds directly to 23S ribosomal RNA and is necessary for the in vitro assembly process of the 50S ribosomal subunit. It is not involved in the protein synthesizing functions of that subunit. This is Large ribosomal subunit protein bL20 from Oceanobacillus iheyensis (strain DSM 14371 / CIP 107618 / JCM 11309 / KCTC 3954 / HTE831).